Reading from the N-terminus, the 119-residue chain is Gas vesicle protein O1 (119 aa).

Basic and acidic residues predominate over residues M1–E12. A disordered region spans residues M1–A48. A compositionally biased stretch (polar residues) spans G26–T42.

The protein belongs to the gas vesicle GvpO family. As to quaternary structure, forms homodimers, forms a GvpN1-GvpO1 heterodimer, interacts with GvpC1 (via the latter's C-terminus), GvpF1, GvpI1 and GvpL1, might interact with GvpA1.

It localises to the gas vesicle. It is found in the cytoplasm. Functionally, a minor component of the gas vesicle, also found in soluble extracts. May play a role in transcription and/or RNA stability and in GV assembly. Gas vesicles are hollow, gas filled proteinaceous nanostructures found in several microbial planktonic microorganisms. They allow positioning of halobacteria at the optimal depth for growth in the poorly aerated, shallow brine pools of their habitat. In terms of biological role, expression of a 9.5 kb p-vac DNA fragment containing 2 divergently transcribed regions (gvpD-gvpE-gvpF-gvpG-gvpH-gvpI-gvpJ-gvpK-gvpL-gvpM and gvpA-gvpC-gvpN-gvpO) allows H.volcanii to produce gas vesicles. A minimal gas vesicle can be made in H.volcanii by gvpA1-gvpO1 gvpF1-gvpG1-gvpJ1-gvpK1-gvpL1-gvpM1; lack of enough GvpJ1 prevents formation. The same region restores gas vesicle production in H.halobium without the p-vac locus, but it still has the c-vac locus. The sequence is that of Gas vesicle protein O1 from Halobacterium salinarum (strain ATCC 700922 / JCM 11081 / NRC-1) (Halobacterium halobium).